Reading from the N-terminus, the 209-residue chain is Glutathione S-transferase F7 (209 aa).

The GST N-terminal domain occupies 2–83 (AGIKVFGHPA…YIAHFYSDKG (82 aa)). Glutathione-binding positions include 12–13 (ST), 41–42 (HK), 54–55 (KV), and 67–68 (ES). Residues 90–209 (GSKDIAGIAM…TSRPSAKKVL (120 aa)) form the GST C-terminal domain.

The protein belongs to the GST superfamily. Phi family.

It is found in the cytoplasm. Its subcellular location is the cytosol. It carries out the reaction RX + glutathione = an S-substituted glutathione + a halide anion + H(+). In terms of biological role, may be involved in the conjugation of reduced glutathione to a wide number of exogenous and endogenous hydrophobic electrophiles and have a detoxification role against certain herbicides. The polypeptide is Glutathione S-transferase F7 (Arabidopsis thaliana (Mouse-ear cress)).